The sequence spans 314 residues: GDSL-like esterase Rv1075c (314 aa).

The signal sequence occupies residues 1 to 21 (MPRRSTIALATAGALASTGTA). The active-site Nucleophile is the Ser-80. Asp-244 functions as the Proton donor in the catalytic mechanism. His-247 serves as the catalytic Proton acceptor. The interval 276-314 (IHETPSRPGTATLEPGHTRHSMMSRLRRPRPARAVPTGG) is disordered. The segment covering 293-306 (TRHSMMSRLRRPRP) has biased composition (basic residues).

This sequence belongs to the 'GDSL' lipolytic enzyme family.

The enzyme catalyses an acetyl ester + H2O = an aliphatic alcohol + acetate + H(+). It carries out the reaction a butanoate ester + H2O = an aliphatic alcohol + butanoate + H(+). The catalysed reaction is triacetin + H2O = diacetylglycerol + acetate + H(+). It catalyses the reaction 1,2,3-tributanoylglycerol + H2O = dibutanoylglycerol + butanoate + H(+). With respect to regulation, esterase activity is significantly inhibited by the serine modifier phenylmethylsulfonyl fluoride (PMSF). Completely inhibited by diethyl pyrocarbonate. In terms of biological role, esterase that preferentially hydrolyzes short-chain fatty acids, particularly pNP-acetate (C2) and pNP-butyrate (C4). Also has weak activity with pNP-hexanoate (C6) and pNP-octanoate (C8). It can also hydrolyze short-chain tryglycerides such as triacetin and tributyrin. Important for intracellular survival. The polypeptide is GDSL-like esterase Rv1075c (Mycobacterium tuberculosis (strain ATCC 25618 / H37Rv)).